The primary structure comprises 183 residues: MKNVTHSFVFLAHWPFAGSFGLNTDILATNLINLTVVVGVLIFFGKGVLKDLLDNRKQRILSTIRNSEELRRGTLEQLEKARIRLQKVELEADEYRMNGYSEIEREKENLINATSISLEQLEKSKNETLFYEKQRAMNQVRQRVFQQAVQGALGTLNSCLNTELHFRTIRANIGILGAIEWKR.

The chain crosses the membrane as a helical span at residues 25–45; it reads DILATNLINLTVVVGVLIFFG.

It belongs to the ATPase B chain family. In terms of assembly, F-type ATPases have 2 components, F(1) - the catalytic core - and F(0) - the membrane proton channel. F(1) has five subunits: alpha(3), beta(3), gamma(1), delta(1), epsilon(1). F(0) has four main subunits: a(1), b(1), b'(1) and c(10-14). The alpha and beta chains form an alternating ring which encloses part of the gamma chain. F(1) is attached to F(0) by a central stalk formed by the gamma and epsilon chains, while a peripheral stalk is formed by the delta, b and b' chains.

It localises to the plastid. It is found in the chloroplast thylakoid membrane. Its function is as follows. F(1)F(0) ATP synthase produces ATP from ADP in the presence of a proton or sodium gradient. F-type ATPases consist of two structural domains, F(1) containing the extramembraneous catalytic core and F(0) containing the membrane proton channel, linked together by a central stalk and a peripheral stalk. During catalysis, ATP synthesis in the catalytic domain of F(1) is coupled via a rotary mechanism of the central stalk subunits to proton translocation. Functionally, component of the F(0) channel, it forms part of the peripheral stalk, linking F(1) to F(0). This is ATP synthase subunit b, chloroplastic from Sorghum bicolor (Sorghum).